Consider the following 675-residue polypeptide: UvrABC system protein B (675 aa).

Positions 32-417 (EGLSDGLAYQ…EHAGQVVEQV (386 aa)) constitute a Helicase ATP-binding domain. 45 to 52 (GVTGSGKT) is a binding site for ATP. The short motif at 98–121 (YYDYYQPEAYVPSRDLFIEKDSAI) is the Beta-hairpin element. The Helicase C-terminal domain occupies 436–602 (QVDDLMSEIN…QIKKQVKDII (167 aa)). A UVR domain is found at 634-669 (IKEIAKLEKAMQQAARDLQFEEAAVLRDRIRDIKEN).

It belongs to the UvrB family. Forms a heterotetramer with UvrA during the search for lesions. Interacts with UvrC in an incision complex.

The protein resides in the cytoplasm. The UvrABC repair system catalyzes the recognition and processing of DNA lesions. A damage recognition complex composed of 2 UvrA and 2 UvrB subunits scans DNA for abnormalities. Upon binding of the UvrA(2)B(2) complex to a putative damaged site, the DNA wraps around one UvrB monomer. DNA wrap is dependent on ATP binding by UvrB and probably causes local melting of the DNA helix, facilitating insertion of UvrB beta-hairpin between the DNA strands. Then UvrB probes one DNA strand for the presence of a lesion. If a lesion is found the UvrA subunits dissociate and the UvrB-DNA preincision complex is formed. This complex is subsequently bound by UvrC and the second UvrB is released. If no lesion is found, the DNA wraps around the other UvrB subunit that will check the other stand for damage. This Neisseria meningitidis serogroup B (strain ATCC BAA-335 / MC58) protein is UvrABC system protein B.